The following is a 218-amino-acid chain: Outer-membrane lipoprotein LolB (218 aa).

The signal sequence occupies residues 1 to 20 (MSQVIRTLALTGLALAGLSG). C21 carries N-palmitoyl cysteine lipidation. C21 carries S-diacylglycerol cysteine lipidation.

This sequence belongs to the LolB family. In terms of assembly, monomer.

The protein resides in the cell outer membrane. Its function is as follows. Plays a critical role in the incorporation of lipoproteins in the outer membrane after they are released by the LolA protein. In Xanthomonas campestris pv. campestris (strain 8004), this protein is Outer-membrane lipoprotein LolB.